The following is a 247-amino-acid chain: tRNA uridine(34) hydroxylase (247 aa).

In terms of domain architecture, Rhodanese spans 124 to 218 (TKQNVIVIDT…YLEDTQNKNN (95 aa)). Catalysis depends on Cys178, which acts as the Cysteine persulfide intermediate.

The protein belongs to the TrhO family.

It catalyses the reaction uridine(34) in tRNA + AH2 + O2 = 5-hydroxyuridine(34) in tRNA + A + H2O. Catalyzes oxygen-dependent 5-hydroxyuridine (ho5U) modification at position 34 in tRNAs. The chain is tRNA uridine(34) hydroxylase from Rickettsia akari (strain Hartford).